Reading from the N-terminus, the 273-residue chain is DnaJ homolog subfamily C member 27 (273 aa).

The interval 1 to 18 (MESNVPKRKEPLKSLRIK) is required for interaction with MAPK1. GTP-binding positions include 23 to 30 (GNAEVGKS), 71 to 75 (DMAGH), and 134 to 137 (NKID). Residues 217–273 (DSWEMLGVRPGASREEVNKAYRKLAVLLHPDKCVAPGSEDAFKAVVNARTALLKNIK) form the J domain.

The protein belongs to the small GTPase superfamily. Rab family. In terms of assembly, interacts directly with MAPK1 (wild-type and kinase-deficient forms). Interacts directly (in GTP-bound form) with MAP2K1 (wild-type and kinase-deficient forms).

It localises to the nucleus. Its function is as follows. GTPase which can activate the MEK/ERK pathway and induce cell transformation when overexpressed. May act as a nuclear scaffold for MAPK1, probably by association with MAPK1 nuclear export signal leading to enhanced ERK1/ERK2 signaling. This chain is DnaJ homolog subfamily C member 27 (Dnajc27), found in Rattus norvegicus (Rat).